The sequence spans 270 residues: tRNA pseudouridine synthase A (270 aa).

The Nucleophile role is filled by Asp52. Residue Tyr110 participates in substrate binding. The interval 251–270 (TGAADEPAAPHGVTETRMQL) is disordered.

This sequence belongs to the tRNA pseudouridine synthase TruA family. Homodimer.

The catalysed reaction is uridine(38/39/40) in tRNA = pseudouridine(38/39/40) in tRNA. Its function is as follows. Formation of pseudouridine at positions 38, 39 and 40 in the anticodon stem and loop of transfer RNAs. The chain is tRNA pseudouridine synthase A from Roseiflexus sp. (strain RS-1).